The primary structure comprises 320 residues: Aspartate carbamoyltransferase catalytic subunit (320 aa).

Residues Arg68 and Thr69 each contribute to the carbamoyl phosphate site. Residue Lys96 participates in L-aspartate binding. Residues Arg118, His148, and Gln151 each coordinate carbamoyl phosphate. L-aspartate is bound by residues Arg181 and Arg236. Gly277 and Pro278 together coordinate carbamoyl phosphate.

It belongs to the aspartate/ornithine carbamoyltransferase superfamily. ATCase family. Heterododecamer (2C3:3R2) of six catalytic PyrB chains organized as two trimers (C3), and six regulatory PyrI chains organized as three dimers (R2).

The enzyme catalyses carbamoyl phosphate + L-aspartate = N-carbamoyl-L-aspartate + phosphate + H(+). Its pathway is pyrimidine metabolism; UMP biosynthesis via de novo pathway; (S)-dihydroorotate from bicarbonate: step 2/3. In terms of biological role, catalyzes the condensation of carbamoyl phosphate and aspartate to form carbamoyl aspartate and inorganic phosphate, the committed step in the de novo pyrimidine nucleotide biosynthesis pathway. This is Aspartate carbamoyltransferase catalytic subunit from Polaromonas naphthalenivorans (strain CJ2).